Consider the following 267-residue polypeptide: Phosphatidylglycerol--prolipoprotein diacylglyceryl transferase (267 aa).

The next 7 helical transmembrane spans lie at 17-37 (LNIRWYGLMYILGFVAAWLLA), 56-76 (LVTYSVFGVILGGRLGYTLFY), 91-111 (IWNGGMSFHGGLLGVIIAIWL), 120-140 (LFEVGDFTAPLVAPGLLAGRL), 173-193 (QLYEAALEGVALFIILWLFSA), 199-219 (MAVSGMFLLLYGSFRFFVEFF), and 236-256 (MGQILCLPMILGGLVLVGFAM). Position 139 (Arg139) interacts with a 1,2-diacyl-sn-glycero-3-phospho-(1'-sn-glycerol).

This sequence belongs to the Lgt family.

Its subcellular location is the cell inner membrane. The enzyme catalyses L-cysteinyl-[prolipoprotein] + a 1,2-diacyl-sn-glycero-3-phospho-(1'-sn-glycerol) = an S-1,2-diacyl-sn-glyceryl-L-cysteinyl-[prolipoprotein] + sn-glycerol 1-phosphate + H(+). It functions in the pathway protein modification; lipoprotein biosynthesis (diacylglyceryl transfer). In terms of biological role, catalyzes the transfer of the diacylglyceryl group from phosphatidylglycerol to the sulfhydryl group of the N-terminal cysteine of a prolipoprotein, the first step in the formation of mature lipoproteins. This chain is Phosphatidylglycerol--prolipoprotein diacylglyceryl transferase, found in Oleidesulfovibrio alaskensis (strain ATCC BAA-1058 / DSM 17464 / G20) (Desulfovibrio alaskensis).